The primary structure comprises 1157 residues: ATP-dependent helicase/deoxyribonuclease subunit B (1157 aa).

Positions 1–275 (MTLHAYLGRA…QYFNQLYRFN (275 aa)) constitute a UvrD-like helicase ATP-binding domain. 8 to 15 (GRAGTGKS) is an ATP binding site. One can recognise a UvrD-like helicase C-terminal domain in the interval 269-583 (NQLYRFNNQD…SIGTMDLAKV (315 aa)). [4Fe-4S] cluster-binding residues include Cys-784, Cys-1112, Cys-1115, and Cys-1121.

Belongs to the helicase family. AddB/RexB type 1 subfamily. In terms of assembly, heterodimer of AddA and AddB. Mg(2+) is required as a cofactor. It depends on [4Fe-4S] cluster as a cofactor.

Functionally, the heterodimer acts as both an ATP-dependent DNA helicase and an ATP-dependent, dual-direction single-stranded exonuclease. Recognizes the chi site generating a DNA molecule suitable for the initiation of homologous recombination. The AddB subunit has 5' -&gt; 3' nuclease activity but not helicase activity. The sequence is that of ATP-dependent helicase/deoxyribonuclease subunit B from Staphylococcus aureus (strain JH9).